Here is a 909-residue protein sequence, read N- to C-terminus: Villin-1 (909 aa).

Gelsolin-like repeat units lie at residues 29–79 (KQLI…VDSI), 149–189 (VRVK…QEKA), 262–305 (GNLH…TERK), 391–448 (LKVW…QDRA), 529–569 (MQAI…SDHE), and 631–672 (LKVK…KSKE). 2 disordered regions span residues 733–781 (SLKG…CSSE) and 816–835 (DGVA…QKPR). Residues 752–762 (QSKDNASRDLQ) show a composition bias toward basic and acidic residues. The residue at position 780 (S780) is a Phosphoserine. In terms of domain architecture, HP spans 844 to 909 (SLESLAYSYE…NKLKISLHLF (66 aa)).

The protein belongs to the villin/gelsolin family. Expressed in all tissues examined. Mainly detected in the vascular tissue and the pericycle of roots and in the vasculature of leaves. Not expressed in the root cap.

Its subcellular location is the cytoplasm. It is found in the cytoskeleton. Functionally, binds actin and actin filament bundles in a Ca(2+)/calmodulin-insensitive manner, but is unable to sever, cap, and nucleate actin filament formation in vitro. Does not protect individual filaments from severing by VLN3 (AC O81645). This chain is Villin-1, found in Arabidopsis thaliana (Mouse-ear cress).